A 213-amino-acid polypeptide reads, in one-letter code: ATP synthase peripheral stalk subunit OSCP, mitochondrial (213 aa).

The N-terminal 23 residues, 1 to 23 (MAAPATSVLSRQVRSFSTSVVRP), are a transit peptide targeting the mitochondrion. Positions 5–23 (ATSVLSRQVRSFSTSVVRP) match the SIFI-degron motif. Residues Lys-60, Lys-70, and Lys-73 each carry the N6-acetyllysine modification. N6-succinyllysine is present on Lys-90. N6-acetyllysine; alternate is present on residues Lys-100 and Lys-158. Residues Lys-100 and Lys-158 each carry the N6-succinyllysine; alternate modification. N6-acetyllysine is present on residues Lys-176 and Lys-192. Lys-199 carries the post-translational modification N6-succinyllysine.

This sequence belongs to the ATPase delta chain family. As to quaternary structure, component of the ATP synthase complex composed at least of ATP5F1A/subunit alpha, ATP5F1B/subunit beta, ATP5MC1/subunit c (homooctomer), MT-ATP6/subunit a, MT-ATP8/subunit 8, ATP5ME/subunit e, ATP5MF/subunit f, ATP5MG/subunit g, ATP5MK/subunit k, ATP5MJ/subunit j, ATP5F1C/subunit gamma, ATP5F1D/subunit delta, ATP5F1E/subunit epsilon, ATP5PF/subunit F6, ATP5PB/subunit b, ATP5PD/subunit d, ATP5PO/subunit OSCP. ATP synthase complex consists of a soluble F(1) head domain (subunits alpha(3) and beta(3)) - the catalytic core - and a membrane F(0) domain - the membrane proton channel (subunits c, a, 8, e, f, g, k and j). These two domains are linked by a central stalk (subunits gamma, delta, and epsilon) rotating inside the F1 region and a stationary peripheral stalk (subunits F6, b, d, and OSCP). In terms of processing, in response to mitochondrial stress, the precursor protein is ubiquitinated by the SIFI complex in the cytoplasm before mitochondrial import, leading to its degradation. Within the SIFI complex, UBR4 initiates ubiquitin chain that are further elongated or branched by KCMF1. In terms of tissue distribution, expressed by the principal cells of the epididymis. Detected in flagella of epididymal sperm (at protein level).

Its subcellular location is the mitochondrion. The protein resides in the mitochondrion inner membrane. Subunit OSCP, of the mitochondrial membrane ATP synthase complex (F(1)F(0) ATP synthase or Complex V) that produces ATP from ADP in the presence of a proton gradient across the membrane which is generated by electron transport complexes of the respiratory chain. ATP synthase complex consist of a soluble F(1) head domain - the catalytic core - and a membrane F(1) domain - the membrane proton channel. These two domains are linked by a central stalk rotating inside the F(1) region and a stationary peripheral stalk. During catalysis, ATP synthesis in the catalytic domain of F(1) is coupled via a rotary mechanism of the central stalk subunits to proton translocation. In vivo, can only synthesize ATP although its ATP hydrolase activity can be activated artificially in vitro. Part of the complex F(0) domain. Part of the complex F(0) domain and the peripheric stalk, which acts as a stator to hold the catalytic alpha(3)beta(3) subcomplex and subunit a/ATP6 static relative to the rotary elements. The sequence is that of ATP synthase peripheral stalk subunit OSCP, mitochondrial from Rattus norvegicus (Rat).